The sequence spans 389 residues: NADH-quinone oxidoreductase subunit D (389 aa).

Belongs to the complex I 49 kDa subunit family. NDH-1 is composed of 14 different subunits. Subunits NuoB, C, D, E, F, and G constitute the peripheral sector of the complex.

It localises to the cell inner membrane. It carries out the reaction a quinone + NADH + 5 H(+)(in) = a quinol + NAD(+) + 4 H(+)(out). Functionally, NDH-1 shuttles electrons from NADH, via FMN and iron-sulfur (Fe-S) centers, to quinones in the respiratory chain. The immediate electron acceptor for the enzyme in this species is believed to be ubiquinone. Couples the redox reaction to proton translocation (for every two electrons transferred, four hydrogen ions are translocated across the cytoplasmic membrane), and thus conserves the redox energy in a proton gradient. The polypeptide is NADH-quinone oxidoreductase subunit D (Citrifermentans bemidjiense (strain ATCC BAA-1014 / DSM 16622 / JCM 12645 / Bem) (Geobacter bemidjiensis)).